We begin with the raw amino-acid sequence, 47 residues long: PhoP/PhoQ regulator MgrB (47 aa).

Residues 6–26 (WVVLGIVVVVCLLLWAQVFNI) form a helical membrane-spanning segment.

Belongs to the MgrB family. As to quaternary structure, may form homooligomers. Probably interacts with the periplasmic domain of PhoQ.

It localises to the cell inner membrane. Functionally, phoP-regulated transcription is redox-sensitive, being activated when the periplasm becomes more reducing. MgrB acts between DsbA/DsbB and PhoP/PhoQ in this pathway. Represses PhoP/PhoQ signaling, possibly by binding to the periplasmic domain of PhoQ, altering its activity and that of downstream effector PhoP. The sequence is that of PhoP/PhoQ regulator MgrB from Salmonella agona (strain SL483).